We begin with the raw amino-acid sequence, 438 residues long: Tol-Pal system protein TolB (438 aa).

The first 36 residues, 1 to 36 (MTPAFRRADLTGFLRTYGAALILLLAAMLAWQPAQA), serve as a signal peptide directing secretion.

Belongs to the TolB family. The Tol-Pal system is composed of five core proteins: the inner membrane proteins TolA, TolQ and TolR, the periplasmic protein TolB and the outer membrane protein Pal. They form a network linking the inner and outer membranes and the peptidoglycan layer.

Its subcellular location is the periplasm. Part of the Tol-Pal system, which plays a role in outer membrane invagination during cell division and is important for maintaining outer membrane integrity. This Bordetella pertussis (strain Tohama I / ATCC BAA-589 / NCTC 13251) protein is Tol-Pal system protein TolB.